Here is a 380-residue protein sequence, read N- to C-terminus: Glucose-1-phosphate adenylyltransferase (380 aa).

Alpha-D-glucose 1-phosphate is bound by residues glycine 164, glutamate 179–lysine 180, and serine 190.

Belongs to the bacterial/plant glucose-1-phosphate adenylyltransferase family. Homotetramer.

The catalysed reaction is alpha-D-glucose 1-phosphate + ATP + H(+) = ADP-alpha-D-glucose + diphosphate. The protein operates within glycan biosynthesis; glycogen biosynthesis. Functionally, involved in the biosynthesis of ADP-glucose, a building block required for the elongation reactions to produce glycogen. Catalyzes the reaction between ATP and alpha-D-glucose 1-phosphate (G1P) to produce pyrophosphate and ADP-Glc. This chain is Glucose-1-phosphate adenylyltransferase, found in Streptococcus pneumoniae (strain Hungary19A-6).